The following is a 92-amino-acid chain: FMRFamide-like neuropeptides 16 (92 aa).

Residues 1-24 form the signal peptide; it reads MNFSGFEFSSIVAFFLLILQLSTA. Residues 25-55 constitute a propeptide that is removed on maturation; that stretch reads AVLPADYAYGVADEMSALPDSGSLFAEQRPS. A phenylalanine amide mark is found at phenylalanine 64, phenylalanine 74, and phenylalanine 84. Positions 87 to 92 are excised as a propeptide; sequence SAPFEQ.

It belongs to the FARP (FMRFamide related peptide) family. As to expression, each flp gene is expressed in a distinct set of neurons.

The protein resides in the secreted. Functionally, FMRFamides and FMRFamide-like peptides are neuropeptides. AQTFVRF-amide inhibits the activity of dissected pharyngeal myogenic muscle system. This chain is FMRFamide-like neuropeptides 16, found in Caenorhabditis elegans.